Consider the following 189-residue polypeptide: UPF0149 protein VF_2102 (189 aa).

The protein belongs to the UPF0149 family.

The polypeptide is UPF0149 protein VF_2102 (Aliivibrio fischeri (strain ATCC 700601 / ES114) (Vibrio fischeri)).